The following is a 175-amino-acid chain: Peptide deformylase (175 aa).

Fe cation-binding residues include Cys96 and His138. Glu139 is a catalytic residue. His142 serves as a coordination point for Fe cation.

This sequence belongs to the polypeptide deformylase family. Fe(2+) is required as a cofactor.

The enzyme catalyses N-terminal N-formyl-L-methionyl-[peptide] + H2O = N-terminal L-methionyl-[peptide] + formate. In terms of biological role, removes the formyl group from the N-terminal Met of newly synthesized proteins. Requires at least a dipeptide for an efficient rate of reaction. N-terminal L-methionine is a prerequisite for activity but the enzyme has broad specificity at other positions. This is Peptide deformylase from Rhodopseudomonas palustris (strain BisB5).